Here is a 218-residue protein sequence, read N- to C-terminus: Phosphoglycolate phosphatase (218 aa).

The active-site Nucleophile is the D7. Mg(2+)-binding residues include D7, D9, and D167.

This sequence belongs to the HAD-like hydrolase superfamily. CbbY/CbbZ/Gph/YieH family. Mg(2+) is required as a cofactor.

It catalyses the reaction 2-phosphoglycolate + H2O = glycolate + phosphate. The protein operates within organic acid metabolism; glycolate biosynthesis; glycolate from 2-phosphoglycolate: step 1/1. Its function is as follows. Specifically catalyzes the dephosphorylation of 2-phosphoglycolate. Is involved in the dissimilation of the intracellular 2-phosphoglycolate formed during the DNA repair of 3'-phosphoglycolate ends, a major class of DNA lesions induced by oxidative stress. This is Phosphoglycolate phosphatase from Cereibacter sphaeroides (strain ATCC 17029 / ATH 2.4.9) (Rhodobacter sphaeroides).